Reading from the N-terminus, the 695-residue chain is Polyribonucleotide nucleotidyltransferase (695 aa).

Mg(2+) contacts are provided by Asp-486 and Asp-492. Residues 553-612 (PRIETMQINTSKIATVIGPGGKQIRQIIERSGAQVDINDDGVINIAASTQESINKAKELI) form the KH domain. Residues 622–690 (GKVYNGRVTS…EKGQLKLSHK (69 aa)) form the S1 motif domain.

The protein belongs to the polyribonucleotide nucleotidyltransferase family. Mg(2+) is required as a cofactor.

It localises to the cytoplasm. It catalyses the reaction RNA(n+1) + phosphate = RNA(n) + a ribonucleoside 5'-diphosphate. Functionally, involved in mRNA degradation. Catalyzes the phosphorolysis of single-stranded polyribonucleotides processively in the 3'- to 5'-direction. The sequence is that of Polyribonucleotide nucleotidyltransferase from Chlamydia trachomatis serovar L2 (strain ATCC VR-902B / DSM 19102 / 434/Bu).